We begin with the raw amino-acid sequence, 246 residues long: 14-3-3 protein beta/alpha (246 aa).

Position 1 is an N-acetylmethionine; in 14-3-3 protein beta/alpha; alternate (M1). M1 carries the post-translational modification N-acetylmethionine. An N-acetylthreonine; in 14-3-3 protein beta/alpha, N-terminally processed modification is found at T2. Position 2 is a phosphothreonine (T2). K5 is modified (N6-acetyllysine). N6-acetyllysine; alternate is present on K51. Residue K51 forms a Glycyl lysine isopeptide (Lys-Gly) (interchain with G-Cter in SUMO2); alternate linkage. Position 60 is a phosphoserine (S60). N6-acetyllysine is present on K70. Y84 and Y106 each carry 3'-nitrotyrosine. K117 is subject to N6-acetyllysine. Phosphoserine is present on residues S186 and S232.

This sequence belongs to the 14-3-3 family. Homodimer. Interacts with SAMSN1 and PRKCE. Interacts with AKAP13. Interacts with SSH1 and TORC2/CRTC2. Interacts with ABL1; the interaction results in cytoplasmic location of ABL1 and inhibition of cABL-mediated apoptosis. Interacts with ROR2 (dimer); the interaction results in phosphorylation of YWHAB on tyrosine residues. Interacts with GAB2. Interacts with YAP1 (phosphorylated form). Interacts with the phosphorylated (by AKT1) form of SRPK2. Interacts with PKA-phosphorylated AANAT. Interacts with MYO1C. Interacts with SIRT2. Interacts with the 'Thr-369' phosphorylated form of DAPK2. Interacts with PI4KB, TBC1D22A and TBC1D22B. Interacts with the 'Ser-1134' and 'Ser-1161' phosphorylated form of SOS1. Interacts (via phosphorylated form) with YWHAB; this interaction occurs in a protein kinase AKT1-dependent manner. Interacts with SLITRK1. Interacts with SYNPO2 (phosphorylated form); YWHAB competes with ACTN2 for interaction with SYNPO2. Interacts with RIPOR2 (via phosphorylated form) isoform 2; this interaction occurs in a chemokine-dependent manner and does not compete for binding of RIPOR2 with RHOA nor blocks inhibition of RIPOR2-mediated RHOA activity. Interacts with MARK2 and MARK3. Interacts with TESK1; the interaction is dependent on the phosphorylation of TESK1 'Ser-437' and inhibits TESK1 kinase activity. Interacts with MEFV. Interacts with HDAC4. Interacts with ADAM22 (via C-terminus). In terms of assembly, (Microbial infection) Interacts with herpes simplex virus 1 protein UL46. As to quaternary structure, (Microbial infection) Probably interacts with Chlamydia trachomatis protein IncG. Post-translationally, the alpha, brain-specific form differs from the beta form in being phosphorylated. Phosphorylated on Ser-60 by protein kinase C delta type catalytic subunit in a sphingosine-dependent fashion.

It localises to the cytoplasm. The protein localises to the melanosome. The protein resides in the vacuole membrane. Functionally, adapter protein implicated in the regulation of a large spectrum of both general and specialized signaling pathways. Binds to a large number of partners, usually by recognition of a phosphoserine or phosphothreonine motif. Binding generally results in the modulation of the activity of the binding partner. Negative regulator of osteogenesis. Blocks the nuclear translocation of the phosphorylated form (by AKT1) of SRPK2 and antagonizes its stimulatory effect on cyclin D1 expression resulting in blockage of neuronal apoptosis elicited by SRPK2. Negative regulator of signaling cascades that mediate activation of MAP kinases via AKAP13. This is 14-3-3 protein beta/alpha (YWHAB) from Homo sapiens (Human).